Here is a 4008-residue protein sequence, read N- to C-terminus: Extracellular matrix organizing protein FRAS1 (4008 aa).

An N-terminal signal peptide occupies residues 1–26 (MGVLKVWLGLALALAEFAVLPHHSEG). VWFC domains lie at 27–88 (ACVY…PECV), 93–153 (GSCH…PVCV), 157–217 (KPCS…PQCS), 219–279 (RSCS…EECV), and 283–343 (GSCS…PECI). Topologically, residues 27 to 3901 (ACVYQDSLLA…AASLSQTGAS (3875 aa)) are extracellular. Residue S344 is modified to Phosphoserine. The VWFC 6 domain occupies 347 to 417 (GYCVYEETGE…VKGQCCPDCT (71 aa)). N-linked (GlcNAc...) asparagine glycosylation is present at N361. FU repeat units follow at residues 409 to 460 (KGQC…GFYQ), 462 to 505 (GSLC…GFYQ), 507 to 553 (RHSC…GFYN), 555 to 599 (QGTC…GYYA), 602 to 647 (TGRC…GFYS), 649 to 705 (HGVC…HFYL), 708 to 753 (TGIC…GYFH), 755 to 800 (EGSC…EQFL), 803 to 852 (VGYC…GYYA), 854 to 900 (RGAC…GHYL), 903 to 948 (NHVC…QYYL), 952 to 997 (TNTC…SFYQ), 999 to 1042 (SGLC…GYFA), and 1046 to 1089 (KHKC…GFSV). N728 is a glycosylation site (N-linked (GlcNAc...) asparagine). N1093 and N1108 each carry an N-linked (GlcNAc...) asparagine glycan. 7 CSPG repeats span residues 1102–1197 (TPSL…LKIS), 1217–1308 (APYV…LQAN), 1329–1438 (GLQL…FEVS), 1463–1559 (APKV…FSFA), 1595–1689 (PVFQ…ISVT), 1710–1810 (GPRL…FSVS), and 1833–1936 (PPVI…FYVS). N1504 carries N-linked (GlcNAc...) asparagine glycosylation. N1777 carries an N-linked (GlcNAc...) asparagine glycan. N-linked (GlcNAc...) asparagine glycans are attached at residues N1948 and N1978. CSPG repeat units lie at residues 1957 to 2057 (EPPR…FSLT), 2078 to 2177 (TPHL…FDVV), 2199 to 2291 (PPVI…FTLS), 2311 to 2404 (SLPV…FTVS), and 2439 to 2536 (TPRI…FLVK). Calx-beta domains lie at 2543–2646 (VSDN…VELS), 2659–2770 (AKVI…IALA), 2784–2890 (AKVL…VFLS), 2905–3007 (IAIN…VYLG), and 3025–3129 (ATIT…LVLG). Residues N2563, N2664, and N2682 are each glycosylated (N-linked (GlcNAc...) asparagine). 6 N-linked (GlcNAc...) asparagine glycosylation sites follow: N2908, N2985, N3070, N3218, N3676, and N3875. A helical membrane pass occupies residues 3902–3922 (IGSALAAIMLLLLVFLVACFI). At 3923 to 4008 (NRKCQKQRKK…HNNLQDGTEV (86 aa)) the chain is on the cytoplasmic side.

The protein belongs to the FRAS1 family. As to expression, expressed in many adult tissues, with highest levels in kidney, pancreas and thalamus. Relatively high expression was also detected in fetal kidney and heart.

It localises to the cell membrane. Functionally, involved in extracellular matrix organization. Required for the regulation of epidermal-basement membrane adhesion responsible for proper organogenesis during embryonic development. Involved in brain organization and function. The sequence is that of Extracellular matrix organizing protein FRAS1 from Homo sapiens (Human).